The following is a 160-amino-acid chain: Nucleotide-binding protein VFMJ11_1323 (160 aa).

The protein belongs to the YajQ family.

Functionally, nucleotide-binding protein. This is Nucleotide-binding protein VFMJ11_1323 from Aliivibrio fischeri (strain MJ11) (Vibrio fischeri).